A 311-amino-acid chain; its full sequence is Vomeronasal type-1 receptor 3 (311 aa).

Topologically, residues Met1–Asp5 are extracellular. The chain crosses the membrane as a helical span at residues Phe6–Leu26. Topologically, residues Leu27–Thr51 are cytoplasmic. Residues Ile52 to Leu72 form a helical membrane-spanning segment. Residues Lys73 to Arg92 are Extracellular-facing. Residues Ala93–Ser113 traverse the membrane as a helical segment. At Glu114–Ser130 the chain is on the cytoplasmic side. The helical transmembrane segment at Phe131 to Val151 threads the bilayer. Topologically, residues Thr152–Ser187 are extracellular. N-linked (GlcNAc...) asparagine glycosylation is present at Asn159. A helical membrane pass occupies residues Ser188–Leu208. The Cytoplasmic portion of the chain corresponds to His209–Arg232. A helical transmembrane segment spans residues Val233–Arg249. The Extracellular portion of the chain corresponds to Ser250–Trp264. A helical membrane pass occupies residues Trp265–Leu285. The Cytoplasmic segment spans residues Met286–Arg311.

It belongs to the G-protein coupled receptor 1 family.

The protein localises to the cell membrane. Functionally, putative pheromone receptor. The sequence is that of Vomeronasal type-1 receptor 3 (VN1R3) from Homo sapiens (Human).